The primary structure comprises 334 residues: Phosphate acyltransferase (334 aa).

It belongs to the PlsX family. In terms of assembly, homodimer. Probably interacts with PlsY.

It localises to the cytoplasm. It catalyses the reaction a fatty acyl-[ACP] + phosphate = an acyl phosphate + holo-[ACP]. It functions in the pathway lipid metabolism; phospholipid metabolism. In terms of biological role, catalyzes the reversible formation of acyl-phosphate (acyl-PO(4)) from acyl-[acyl-carrier-protein] (acyl-ACP). This enzyme utilizes acyl-ACP as fatty acyl donor, but not acyl-CoA. In Thermotoga petrophila (strain ATCC BAA-488 / DSM 13995 / JCM 10881 / RKU-1), this protein is Phosphate acyltransferase.